The chain runs to 82 residues: Turripeptide IX-07 (82 aa).

The first 21 residues, 1–21 (MGFYMLLTVALLLTSLMNVEA), serve as a signal peptide directing secretion. Positions 22–39 (TPVNQAERSALEKSGLGN) are excised as a propeptide. 3 disulfides stabilise this stretch: Cys-48/Cys-70, Cys-55/Cys-74, and Cys-60/Cys-81.

As to expression, expressed by the venom duct.

The protein resides in the secreted. The protein is Turripeptide IX-07 of Gemmula speciosa (Splendid gem-turris).